The following is a 254-amino-acid chain: Metalloprotease YcaL (254 aa).

Residues 1–19 (MKNTKLLLAIATSAALLTG) form the signal peptide. A lipid anchor (N-palmitoyl cysteine) is attached at C20. C20 is lipidated: S-diacylglycerol cysteine. H134 lines the Zn(2+) pocket. Residue E135 is part of the active site. Zn(2+) is bound by residues H138 and E193. The tract at residues 227–254 (GRTQSMFDSHPPSTERAQHIRDRIASGK) is disordered. The segment covering 242-254 (RAQHIRDRIASGK) has biased composition (basic and acidic residues).

Belongs to the peptidase M48B family. Zn(2+) is required as a cofactor.

The protein resides in the cell inner membrane. Its function is as follows. Involved in the degradation of the LPS-assembly protein LptD. Degrades LptD that have engaged the Bam complex but are stalled at an early step in the outer membrane protein assembly process. The sequence is that of Metalloprotease YcaL (ycaL) from Escherichia coli (strain K12).